The sequence spans 259 residues: Protein odd-skipped-related 1 (259 aa).

3 C2H2-type zinc fingers span residues Phe-168 to His-190, Tyr-196 to His-218, and Phe-224 to His-246.

The protein belongs to the Odd C2H2-type zinc-finger protein family.

The protein resides in the nucleus. Functionally, transcriptional repressor. Required for pronephric kidney development. In Xenopus tropicalis (Western clawed frog), this protein is Protein odd-skipped-related 1.